The sequence spans 757 residues: Transcription regulator rua1 (757 aa).

Disordered regions lie at residues 122-169 (SSGS…LPVS), 181-218 (NHQV…SNQD), 237-295 (RNTG…NGYT), 372-393 (SADC…PYPL), and 422-582 (MELQ…IGNA). The span at 125–165 (SATKSEPSTCSSSTDFSMSSTADASTAPQHSSSGDSSMSSG) shows a compositional bias: low complexity. Composition is skewed to polar residues over residues 181 to 190 (NHQVTTQDAS) and 200 to 218 (QPPS…SNQD). The segment covering 240–249 (GHRQHNRHQK) has biased composition (basic residues). Residues 253–277 (LPQGQSCTNSGSSSRQVTRPNSPNH) are compositionally biased toward polar residues. The segment covering 379–393 (PRPPSNSPEPHPYPL) has biased composition (pro residues). A compositionally biased stretch (polar residues) spans 428 to 437 (PARSNSTFGR). A compositionally biased stretch (basic residues) spans 439–453 (SQRHHQPPPSHRQRS). Composition is skewed to low complexity over residues 454 to 465 (RTSASSISNTNA), 494 to 510 (ASQS…ATDA), and 543 to 582 (TSSS…IGNA). A C2H2-type 1 degenerate zinc finger spans residues 661–692 (REGWCSLCPQGEWYSMKRSQYLYHMQFDHGIS). The C2H2-type 2; degenerate zinc finger occupies 717-750 (GLCHHCNKWIPICFGPQRKRDFKAWFKHARKCHR).

Its subcellular location is the nucleus. Its function is as follows. Transcription factor; part of the gene cluster that mediates the biosynthesis of the glycolipid biosurfactant ustilagic acid (UA). UA is a secreted cellobiose glycolipid that is toxic for many microorganisms and confers biocontrol activity to U.maydis. Recognizes and binds to the specific 5'-T/G-G/T-C-G-C-A-T-A/T-C/T-C/T-G/A-3' upstream activating sequence found in all promoters of the UA biosynthesis genes. This chain is Transcription regulator rua1, found in Mycosarcoma maydis (Corn smut fungus).